The following is a 691-amino-acid chain: ATP-dependent zinc metalloprotease FtsH 2 (691 aa).

The segment at 1 to 48 is disordered; it reads MTDEPQSDEQQTTEQERPLGTKRATRADGLRRPGVRSGLAERRSPAAD. The Cytoplasmic portion of the chain corresponds to 1–64; the sequence is MTDEPQSDEQ…AAVRRFLLRD (64 aa). The span at 14 to 31 shows a compositional bias: basic and acidic residues; sequence EQERPLGTKRATRADGLR. Residues 65–85 form a helical membrane-spanning segment; the sequence is VFALGLMIAALVIVILFFTLL. The Extracellular portion of the chain corresponds to 86-168; that stretch reads GATKPTSSGT…AVKQQPGKAQ (83 aa). A helical transmembrane segment spans residues 169 to 189; that stretch reads VTIVVQFLLPILLLVCLFALF. Over 190–691 the chain is Cytoplasmic; that stretch reads MRIGQDGGAG…ERGSARDRDA (502 aa). ATP is bound at residue 265-272; it reads GPPGTGKT. H486 contributes to the Zn(2+) binding site. The active site involves E487. Zn(2+) is bound by residues H490 and D563.

This sequence in the central section; belongs to the AAA ATPase family. It in the C-terminal section; belongs to the peptidase M41 family. Homohexamer. The cofactor is Zn(2+).

It is found in the cell membrane. Functionally, acts as a processive, ATP-dependent zinc metallopeptidase for both cytoplasmic and membrane proteins. Plays a role in the quality control of integral membrane proteins. In Conexibacter woesei (strain DSM 14684 / CCUG 47730 / CIP 108061 / JCM 11494 / NBRC 100937 / ID131577), this protein is ATP-dependent zinc metalloprotease FtsH 2.